A 198-amino-acid chain; its full sequence is Peptidyl-tRNA hydrolase (198 aa).

Tyrosine 16 contacts tRNA. Histidine 21 functions as the Proton acceptor in the catalytic mechanism. The tRNA site is built by tyrosine 67, asparagine 69, and asparagine 115.

This sequence belongs to the PTH family. Monomer.

The protein resides in the cytoplasm. The enzyme catalyses an N-acyl-L-alpha-aminoacyl-tRNA + H2O = an N-acyl-L-amino acid + a tRNA + H(+). Its function is as follows. Hydrolyzes ribosome-free peptidyl-tRNAs (with 1 or more amino acids incorporated), which drop off the ribosome during protein synthesis, or as a result of ribosome stalling. Functionally, catalyzes the release of premature peptidyl moieties from peptidyl-tRNA molecules trapped in stalled 50S ribosomal subunits, and thus maintains levels of free tRNAs and 50S ribosomes. This is Peptidyl-tRNA hydrolase from Gloeobacter violaceus (strain ATCC 29082 / PCC 7421).